The sequence spans 417 residues: Gamma-glutamyl phosphate reductase (417 aa).

The protein belongs to the gamma-glutamyl phosphate reductase family.

Its subcellular location is the cytoplasm. It carries out the reaction L-glutamate 5-semialdehyde + phosphate + NADP(+) = L-glutamyl 5-phosphate + NADPH + H(+). It participates in amino-acid biosynthesis; L-proline biosynthesis; L-glutamate 5-semialdehyde from L-glutamate: step 2/2. Catalyzes the NADPH-dependent reduction of L-glutamate 5-phosphate into L-glutamate 5-semialdehyde and phosphate. The product spontaneously undergoes cyclization to form 1-pyrroline-5-carboxylate. The protein is Gamma-glutamyl phosphate reductase of Escherichia coli (strain 55989 / EAEC).